The sequence spans 921 residues: Retinoblastoma-associated protein (921 aa).

Disordered stretches follow at residues 1-31 and 603-634; these read MPPK…PPGG and RSPK…QKPQ. A compositionally biased stretch (polar residues) spans 612 to 634; it reads HPQSGTSNPDAQPSATSQTQKPQ. The short motif at 853–869 is the Bipartite nuclear localization signal element; that stretch reads KRSAEPSDAPKPLKRLR. Residues 873-921 form a disordered region; that stretch reads EGQDEADGGKHLPQESKFQQKLAEMTSTRTRMQKQKLNDGNDTSANEEK. The segment covering 910–921 has biased composition (polar residues); it reads NDGNDTSANEEK.

The protein belongs to the retinoblastoma protein (RB) family. In terms of assembly, interacts with and sequesters the E2F1 transcription factor, thereby inhibiting E2F1 transcription. Interacts with SUV39H1, KMT5B and KMT5C. (Microbial infection) Interacts with, and is inhibited by fowl adenovirus 1 protein GAM-1. Post-translationally, phosphorylated in G1, thereby releasing E2F1 which is then able to activate cell growth. Dephosphorylated at the late M phase. Phosphorylation of domain C promotes interaction between the C-terminal domain C and the Pocket domain, and thereby inhibits interactions with heterodimeric E2F/DP transcription factor complexes.

The protein resides in the nucleus. The protein localises to the cytoplasm. Functionally, tumor suppressor that is a key regulator of the G1/S transition of the cell cycle. The hypophosphorylated form binds transcription regulators of the E2F family, preventing transcription of E2F-responsive genes. Both physically blocks E2Fs transactivating domain and recruits chromatin-modifying enzymes that actively repress transcription. Cyclin and CDK-dependent phosphorylation of RB1 induces its dissociation from E2Fs, thereby activating transcription of E2F responsive genes and triggering entry into S phase. RB1 also promotes the G0-G1 transition upon phosphorylation and activation by CDK3/cyclin-C. This Gallus gallus (Chicken) protein is Retinoblastoma-associated protein (RB1).